Here is a 224-residue protein sequence, read N- to C-terminus: Transcription cofactor HES-6 (224 aa).

The tract at residues 1–31 is disordered; the sequence is MAPPAAPGRDRVGREDEDGWETRGDRKARKP. A compositionally biased stretch (basic and acidic residues) spans 8–25; the sequence is GRDRVGREDEDGWETRGD. A bHLH domain is found at 25–77; the sequence is DRKARKPLVEKKRRARINESLQELRLLLAGAEVQAKLENAEVLELTVRRVQGV. In terms of domain architecture, Orange spans 96-129; the sequence is FAAGYIQCMHEVHTFVSTCQAIDATVAAELLNHL. Residues 147–161 are compositionally biased toward low complexity; sequence DALAGPPRAPGRSGW. Positions 147 to 205 are disordered; that stretch reads DALAGPPRAPGRSGWPAGGAPGSPIPSPPGPGDDLCSDLEEAPEAELSQAPAEGPDLVP. Residues 181–190 show a composition bias toward acidic residues; it reads LCSDLEEAPE. The short motif at 221–224 is the WRPW motif element; that stretch reads WRPW.

In terms of assembly, transcription repression requires formation of a complex with a corepressor protein of the Groucho/TLE family. Interacts with HES1.

It localises to the nucleus. Functionally, does not bind DNA itself but suppresses both HES1-mediated N box-dependent transcriptional repression and binding of HES1 to E box sequences. Also suppresses HES1-mediated inhibition of the heterodimer formed by ASCL1/MASH1 and TCF3/E47, allowing ASCL1 and TCF3 to up-regulate transcription in its presence. Promotes cell differentiation. The sequence is that of Transcription cofactor HES-6 from Homo sapiens (Human).